Reading from the N-terminus, the 336-residue chain is Opsin-1, short-wave-sensitive 1 (336 aa).

Over 1–29 (MDAWAVQFGNASKVSPFEGEQYHIAPKWA) the chain is Extracellular. Asn10 is a glycosylation site (N-linked (GlcNAc...) asparagine). The chain crosses the membrane as a helical span at residues 30–54 (FYLQAAFMGFVFIVGTPMNGIVLFV). Residues 55-66 (TMKYKKLRQPLN) are Cytoplasmic-facing. A helical membrane pass occupies residues 67–91 (YILVNISLAGFIFDTFSVSQVFVCA). The Extracellular portion of the chain corresponds to 92-106 (ARGYYFLGYTLCAME). Residues Cys103 and Cys180 are joined by a disulfide bond. Residues 107 to 126 (AAMGSIAGLVTGWSLAVLAF) form a helical membrane-spanning segment. At 127–145 (ERYVVICKPFGSFKFGQGQ) the chain is on the cytoplasmic side. A helical transmembrane segment spans residues 146-169 (AVGAVVFTWIIGTACATPPFFGWS). Over 170–195 (RYIPEGLGTACGPDWYTKSEEYNSES) the chain is Extracellular. A helical membrane pass occupies residues 196-223 (YTYFLLITCFMMPMTIIIFSYSQLLGAL). At 224–245 (RAVAAQQAESESTQKAEREVSR) the chain is on the cytoplasmic side. The chain crosses the membrane as a helical span at residues 246–269 (MVVVMVGSFVLCYAPYAVTAMYFA). At 270 to 277 (NSDEPNKD) the chain is on the extracellular side. A helical transmembrane segment spans residues 278-302 (YRLVAIPAFFSKSSCVYNPLIYAFM). Residue Lys289 is modified to N6-(retinylidene)lysine. Topologically, residues 303–336 (NKQFNACIMETVFGKKIDESSEVSSKTETSSVSA) are cytoplasmic.

Belongs to the G-protein coupled receptor 1 family. Opsin subfamily. In terms of processing, phosphorylated on some or all of the serine and threonine residues present in the C-terminal region. Retinal short single cones, outer and inner segments.

It localises to the membrane. Its function is as follows. Visual pigments are the light-absorbing molecules that mediate vision. They consist of an apoprotein, opsin, covalently linked to cis-retinal. This is Opsin-1, short-wave-sensitive 1 (opn1sw1) from Danio rerio (Zebrafish).